Consider the following 232-residue polypeptide: Caffeoyl-CoA O-methyltransferase (232 aa).

A substrate-binding site is contributed by Lys-6. S-adenosyl-L-methionine is bound by residues Thr-48, Glu-70, 72–73, Ser-78, Asp-96, and Ala-125; that span reads GV. Position 148 (Asp-148) interacts with substrate. Asp-148 is a binding site for a divalent metal cation. Asp-150 lines the S-adenosyl-L-methionine pocket. Residues Asp-174 and Asn-175 each coordinate a divalent metal cation. Asn-179 contributes to the substrate binding site.

This sequence belongs to the class I-like SAM-binding methyltransferase superfamily. Cation-dependent O-methyltransferase family. CCoAMT subfamily. It depends on a divalent metal cation as a cofactor.

The catalysed reaction is (E)-caffeoyl-CoA + S-adenosyl-L-methionine = (E)-feruloyl-CoA + S-adenosyl-L-homocysteine + H(+). The protein operates within aromatic compound metabolism; phenylpropanoid biosynthesis. Its function is as follows. Methylates caffeoyl-CoA to feruloyl-CoA and 5-hydroxyferuloyl-CoA to sinapoyl-CoA. Plays a role in the synthesis of feruloylated polysaccharides. Involved in the reinforcement of the plant cell wall. Also involved in the responding to wounding or pathogen challenge by the increased formation of cell wall-bound ferulic acid polymers. This chain is Caffeoyl-CoA O-methyltransferase, found in Citrus natsudaidai (Natsudaidai orange).